We begin with the raw amino-acid sequence, 277 residues long: Uridine-cytidine kinase 1 (277 aa).

Gly residues predominate over residues 1–10; the sequence is MASAGGGDCE. Residues 1-29 form a disordered region; it reads MASAGGGDCEGAGPEADRPHQRPFLIGVS. 30–38 lines the ATP pocket; it reads GGTASGKST. Substrate contacts are provided by Asp-87, Tyr-115, His-120, Arg-169, Arg-178, and Gln-186. Asp-215 lines the ATP pocket. Positions 246-277 are disordered; it reads RSHKRTFPEPGEHPAVLASGKRSHLESSSRPH. Thr-251 is subject to Phosphothreonine. Over residues 268-277 the composition is skewed to basic and acidic residues; it reads SHLESSSRPH.

The protein belongs to the uridine kinase family.

The enzyme catalyses uridine + ATP = UMP + ADP + H(+). The catalysed reaction is cytidine + ATP = CMP + ADP + H(+). The protein operates within pyrimidine metabolism; CTP biosynthesis via salvage pathway; CTP from cytidine: step 1/3. Its pathway is pyrimidine metabolism; UMP biosynthesis via salvage pathway; UMP from uridine: step 1/1. Phosphorylates uridine and cytidine to uridine monophosphate and cytidine monophosphate. Does not phosphorylate deoxyribonucleosides or purine ribonucleosides. Can use ATP or GTP as a phosphate donor. This Bos taurus (Bovine) protein is Uridine-cytidine kinase 1 (UCK1).